The chain runs to 312 residues: Isethionate sulfite-lyase activating enzyme (312 aa).

The 288-residue stretch at 22-309 (HDGPGIRTIV…VDETRGAVTE (288 aa)) folds into the Radical SAM core domain. Positions 36, 40, 43, 62, 65, 68, 72, 92, 95, 100, and 104 each coordinate [4Fe-4S] cluster. 42–44 (WCS) contributes to the S-adenosyl-L-methionine binding site. 2 consecutive 4Fe-4S ferredoxin-type domains span residues 53 to 82 (PQVAYNKGRCIGCHRCIKACEHDAITVNED) and 83 to 115 (GTLSLDRGKCDVCKTLDCAHACPAQGMIIYGEN). S-adenosyl-L-methionine-binding positions include Gly144, 193 to 195 (DVK), and His267.

This sequence belongs to the organic radical-activating enzymes family. Monomer. [4Fe-4S] cluster is required as a cofactor.

It carries out the reaction glycyl-[protein] + reduced [flavodoxin] + S-adenosyl-L-methionine = glycin-2-yl radical-[protein] + semiquinone [flavodoxin] + 5'-deoxyadenosine + L-methionine + H(+). It functions in the pathway organosulfur degradation; alkanesulfonate degradation. Its function is as follows. Involved in an anaerobic respiration pathway that converts the sulfonate taurine (2-aminoethanesulfonate) to ammonia, acetate and sulfide. Catalyzes activation of the isethionate sulfite-lyase IslA under anaerobic conditions by generation of an organic free radical on a glycine residue, via a homolytic cleavage of S-adenosyl-L-methionine (SAM). This Bilophila wadsworthia (strain 3_1_6) protein is Isethionate sulfite-lyase activating enzyme.